Consider the following 938-residue polypeptide: Isoleucine--tRNA ligase (938 aa).

The 'HIGH' region signature appears at 65 to 75; that stretch reads PYANGSIHIGH. An L-isoleucyl-5'-AMP-binding site is contributed by Glu-568. The 'KMSKS' region motif lies at 609–613; the sequence is KMSKS. Lys-612 contacts ATP. Residues Cys-905, Cys-908, Cys-921, and Cys-924 each contribute to the Zn(2+) site.

Belongs to the class-I aminoacyl-tRNA synthetase family. IleS type 1 subfamily. As to quaternary structure, monomer. Zn(2+) is required as a cofactor.

The protein localises to the cytoplasm. The enzyme catalyses tRNA(Ile) + L-isoleucine + ATP = L-isoleucyl-tRNA(Ile) + AMP + diphosphate. Its function is as follows. Catalyzes the attachment of isoleucine to tRNA(Ile). As IleRS can inadvertently accommodate and process structurally similar amino acids such as valine, to avoid such errors it has two additional distinct tRNA(Ile)-dependent editing activities. One activity is designated as 'pretransfer' editing and involves the hydrolysis of activated Val-AMP. The other activity is designated 'posttransfer' editing and involves deacylation of mischarged Val-tRNA(Ile). The sequence is that of Isoleucine--tRNA ligase from Mannheimia succiniciproducens (strain KCTC 0769BP / MBEL55E).